Here is a 523-residue protein sequence, read N- to C-terminus: 2-isopropylmalate synthase (523 aa).

Residues 5 to 267 (VIIFDTTLRD…HTAINHQEIW (263 aa)) form the Pyruvate carboxyltransferase domain. Positions 14, 202, 204, and 238 each coordinate Mn(2+). The regulatory domain stretch occupies residues 392–523 (RLDYFSVQSG…QHNENNKETV (132 aa)).

This sequence belongs to the alpha-IPM synthase/homocitrate synthase family. LeuA type 1 subfamily. In terms of assembly, homodimer. Mn(2+) is required as a cofactor.

The protein resides in the cytoplasm. It carries out the reaction 3-methyl-2-oxobutanoate + acetyl-CoA + H2O = (2S)-2-isopropylmalate + CoA + H(+). The protein operates within amino-acid biosynthesis; L-leucine biosynthesis; L-leucine from 3-methyl-2-oxobutanoate: step 1/4. In terms of biological role, catalyzes the condensation of the acetyl group of acetyl-CoA with 3-methyl-2-oxobutanoate (2-ketoisovalerate) to form 3-carboxy-3-hydroxy-4-methylpentanoate (2-isopropylmalate). The chain is 2-isopropylmalate synthase from Shigella sonnei (strain Ss046).